We begin with the raw amino-acid sequence, 485 residues long: Acetyl-coenzyme A carboxylase carboxyl transferase subunit beta, chloroplastic (485 aa).

The 268-residue stretch at 218-485 (LWIQCDNCYA…FFPLNKNEIK (268 aa)) folds into the CoA carboxyltransferase N-terminal domain. 4 residues coordinate Zn(2+): C222, C225, C241, and C244. Residues 222–244 (CDNCYALIYKKALKFKMNVCEQC) form a C4-type zinc finger.

The protein belongs to the AccD/PCCB family. In terms of assembly, acetyl-CoA carboxylase is a heterohexamer composed of biotin carboxyl carrier protein, biotin carboxylase and 2 subunits each of ACCase subunit alpha and ACCase plastid-coded subunit beta (accD). Zn(2+) serves as cofactor.

The protein localises to the plastid. It localises to the chloroplast stroma. The enzyme catalyses N(6)-carboxybiotinyl-L-lysyl-[protein] + acetyl-CoA = N(6)-biotinyl-L-lysyl-[protein] + malonyl-CoA. Its pathway is lipid metabolism; malonyl-CoA biosynthesis; malonyl-CoA from acetyl-CoA: step 1/1. Component of the acetyl coenzyme A carboxylase (ACC) complex. Biotin carboxylase (BC) catalyzes the carboxylation of biotin on its carrier protein (BCCP) and then the CO(2) group is transferred by the transcarboxylase to acetyl-CoA to form malonyl-CoA. In Aethionema cordifolium (Lebanon stonecress), this protein is Acetyl-coenzyme A carboxylase carboxyl transferase subunit beta, chloroplastic.